A 138-amino-acid chain; its full sequence is MEWNTLVLGLLVLSVVAESSGNNSSTSTSATTSKSSASVSTTKLTTVATTSATTTTTTTLSTTSTKLSSTTHDPNVMRRHANDDFYKAHCTSHMYELSLSSFAAWWTMLNALILMGAFCIVLRHCCFQNFTATTTKGY.

A signal peptide spans 1–21 (MEWNTLVLGLLVLSVVAESSG). At 22 to 101 (NNSSTSTSAT…SHMYELSLSS (80 aa)) the chain is on the virion surface side. A helical transmembrane segment spans residues 102-122 (FAAWWTMLNALILMGAFCIVL). The Intravirion portion of the chain corresponds to 123–138 (RHCCFQNFTATTTKGY).

The protein belongs to the herpesviridae glycoprotein N family. In terms of assembly, interacts (via N-terminus) with gM (via N-terminus). The gM-gN heterodimer forms the gCII complex. O-glycosylated.

Its subcellular location is the virion membrane. The protein localises to the host membrane. It is found in the host Golgi apparatus. It localises to the host trans-Golgi network. Functionally, envelope glycoprotein necessary for proper maturation of gM and modulation of its membrane fusion activity. Also plays a critical role in virion morphogenesis. This Human cytomegalovirus (strain AD169) (HHV-5) protein is Envelope glycoprotein N.